A 511-amino-acid chain; its full sequence is RNA-splicing ligase RtcB homolog (511 aa).

Mn(2+) is bound by residues aspartate 125, cysteine 128, histidine 233, histidine 265, and histidine 359. A GMP-binding site is contributed by 232 to 236 (NHYAE). GMP-binding positions include 359-360 (HN), 408-411 (GGTM), serine 415, 434-437 (HGAG), and lysine 510. Catalysis depends on histidine 434, which acts as the GMP-histidine intermediate.

Belongs to the RtcB family. As to quaternary structure, catalytic component of the tRNA-splicing ligase complex. Requires Mn(2+) as cofactor.

It carries out the reaction a 3'-end 3'-phospho-ribonucleotide-RNA + a 5'-end dephospho-ribonucleoside-RNA + GTP = a ribonucleotidyl-ribonucleotide-RNA + GMP + diphosphate. It catalyses the reaction a 3'-end 2',3'-cyclophospho-ribonucleotide-RNA + a 5'-end dephospho-ribonucleoside-RNA + GTP + H2O = a ribonucleotidyl-ribonucleotide-RNA + GMP + diphosphate + H(+). Functionally, catalytic subunit of the tRNA-splicing ligase complex that acts by directly joining spliced tRNA halves to mature-sized tRNAs by incorporating the precursor-derived splice junction phosphate into the mature tRNA as a canonical 3',5'-phosphodiester. May act as an RNA ligase with broad substrate specificity, and may function toward other RNAs. The protein is RNA-splicing ligase RtcB homolog of Plasmodium knowlesi (strain H).